Reading from the N-terminus, the 550-residue chain is Arginine--tRNA ligase (550 aa).

A 'HIGH' region motif is present at residues 124 to 134 (ANPTGPLHVGH).

Belongs to the class-I aminoacyl-tRNA synthetase family. As to quaternary structure, monomer.

It is found in the cytoplasm. It carries out the reaction tRNA(Arg) + L-arginine + ATP = L-arginyl-tRNA(Arg) + AMP + diphosphate. This chain is Arginine--tRNA ligase, found in Desulfovibrio desulfuricans (strain ATCC 27774 / DSM 6949 / MB).